The sequence spans 477 residues: Succinate-semialdehyde dehydrogenase [NADP(+)] (477 aa).

NADP(+)-binding positions include 142 to 143, 166 to 169, and 218 to 219; these read WN, KHSE, and GS. The active-site Proton acceptor is glutamate 240. An NADP(+)-binding site is contributed by leucine 241. Cysteine 274 acts as the Nucleophile in catalysis. Glutamate 371 lines the NADP(+) pocket.

This sequence belongs to the aldehyde dehydrogenase family.

The enzyme catalyses succinate semialdehyde + NADP(+) + H2O = succinate + NADPH + 2 H(+). It functions in the pathway amino-acid degradation; 4-aminobutanoate degradation. Functionally, catalyzes the NADP(+) dependent oxidation of succinate semialdehyde to succinate. This is Succinate-semialdehyde dehydrogenase [NADP(+)] (ssdA) from Deinococcus radiodurans (strain ATCC 13939 / DSM 20539 / JCM 16871 / CCUG 27074 / LMG 4051 / NBRC 15346 / NCIMB 9279 / VKM B-1422 / R1).